The chain runs to 74 residues: uncharacterized protein (74 aa).

A helical membrane pass occupies residues 7–26; the sequence is IHLYVMASAMSSSPIFFFFQ.

The protein resides in the membrane. This is an uncharacterized protein from Homo sapiens (Human).